The primary structure comprises 242 residues: tRNA1(Val) (adenine(37)-N6)-methyltransferase (242 aa).

Belongs to the methyltransferase superfamily. tRNA (adenine-N(6)-)-methyltransferase family.

Its subcellular location is the cytoplasm. It catalyses the reaction adenosine(37) in tRNA1(Val) + S-adenosyl-L-methionine = N(6)-methyladenosine(37) in tRNA1(Val) + S-adenosyl-L-homocysteine + H(+). Its function is as follows. Specifically methylates the adenine in position 37 of tRNA(1)(Val) (anticodon cmo5UAC). The protein is tRNA1(Val) (adenine(37)-N6)-methyltransferase of Mannheimia succiniciproducens (strain KCTC 0769BP / MBEL55E).